We begin with the raw amino-acid sequence, 276 residues long: MDGPAIITQVTNPKEDEARSPVAGEKASQRNISLKKQRGRSILSSFFCCFRDYNVEAPPANSPSVLPPLVEENGGLQKGDQRQVIPVPSPPAKYLLPEVTVLDYGKKCVVIDLDETLVHSSFKPISNADFIVPVEIDGTIHQVYVLKRPHVDEFLQRMGQLFECVLFTASLAKYADPVADLLDRWGVFRARLFRESCVFHRGNYVKDLSRLGRELSKVIIVDNSPASYIFHPENAVPVQSWFDDMTDTELLDLIPFFEGLSREDDVYSMLHRLCSR.

The tract at residues 1–31 (MDGPAIITQVTNPKEDEARSPVAGEKASQRN) is disordered. The FCP1 homology domain maps to 102–260 (LDYGKKCVVI…LDLIPFFEGL (159 aa)). Asp112 serves as the catalytic 4-aspartylphosphate intermediate. Mg(2+) contacts are provided by Asp112, Asp114, and Asn223. Catalysis depends on Asp114, which acts as the Proton donor.

As to quaternary structure, monomer. Interacts with REST. It depends on Mg(2+) as a cofactor.

Its subcellular location is the nucleus. The enzyme catalyses O-phospho-L-seryl-[protein] + H2O = L-seryl-[protein] + phosphate. The catalysed reaction is O-phospho-L-threonyl-[protein] + H2O = L-threonyl-[protein] + phosphate. Its function is as follows. Preferentially catalyzes the dephosphorylation of 'Ser-5' within the tandem 7 residue repeats in the C-terminal domain (CTD) of the largest RNA polymerase II subunit POLR2A. Negatively regulates RNA polymerase II transcription, possibly by controlling the transition from initiation/capping to processive transcript elongation. Recruited by REST to neuronal genes that contain RE-1 elements, leading to neuronal gene silencing in non-neuronal cells. The chain is CTD small phosphatase-like protein (Ctdspl) from Mus musculus (Mouse).